We begin with the raw amino-acid sequence, 447 residues long: MYKQSWELLGNGQHADLTVAYINARIIDPESKLDIRGSLLTKGDKIIDFGPDLFANGIPSTIDEVIDCNNNILLPGLIDIHVHFREPGQEHKETINTGSKSAAAGGITTVVCQPNTIPTISSVITAKYIKMRALESAYVNIEFYASITKSDNSLSDMALLKEVGAVGFTDDGMPVMNALTMRQALSYSSMLDTVIAQHAEDLNISNNGCINEGIISYELGLKGIPDISESIIVNRDIALMKNIKNVHYHILHVSSQESLHIIKQAKSQGLKVTCEVTPHHFTLTERDIMTHGSLAKMNPPLRTENDRLSMIEGLKSGIIDCIATDHAPHDINAKELPLDTAAFGIVGLETMLPISLELYHNGTMPLIDLLATLTYKPADIIKVPRGRIKKDYVADLIILDLDHEWVVDISKFASKSKNSPFHNRKVKGKVLRTIVSGKTTYKAEIII.

Zn(2+) is bound by residues His81 and His83. Residues 83 to 85 (HFR) and Asn115 each bind substrate. Positions 171, 198, and 252 each coordinate Zn(2+). Asn298 is a binding site for substrate. Residue Asp325 participates in Zn(2+) binding. Residue Asp325 is part of the active site. Residues His329 and 343 to 344 (FG) each bind substrate.

Belongs to the metallo-dependent hydrolases superfamily. DHOase family. Class I DHOase subfamily. The cofactor is Zn(2+).

The enzyme catalyses (S)-dihydroorotate + H2O = N-carbamoyl-L-aspartate + H(+). It functions in the pathway pyrimidine metabolism; UMP biosynthesis via de novo pathway; (S)-dihydroorotate from bicarbonate: step 3/3. Its function is as follows. Catalyzes the reversible cyclization of carbamoyl aspartate to dihydroorotate. In Ehrlichia chaffeensis (strain ATCC CRL-10679 / Arkansas), this protein is Dihydroorotase.